We begin with the raw amino-acid sequence, 547 residues long: Chaperonin GroEL (547 aa).

ATP-binding positions include 30–33 (TLGP), K51, 87–91 (DGTTT), G415, and D496. The segment at 525-547 (KPEPKSPAGGPGMGGMGGMDGMM) is disordered. Residues 533–547 (GGPGMGGMGGMDGMM) show a composition bias toward gly residues.

This sequence belongs to the chaperonin (HSP60) family. As to quaternary structure, forms a cylinder of 14 subunits composed of two heptameric rings stacked back-to-back. Interacts with the co-chaperonin GroES.

It is found in the cytoplasm. The enzyme catalyses ATP + H2O + a folded polypeptide = ADP + phosphate + an unfolded polypeptide.. Its function is as follows. Together with its co-chaperonin GroES, plays an essential role in assisting protein folding. The GroEL-GroES system forms a nano-cage that allows encapsulation of the non-native substrate proteins and provides a physical environment optimized to promote and accelerate protein folding. This is Chaperonin GroEL from Cereibacter sphaeroides (strain ATCC 17029 / ATH 2.4.9) (Rhodobacter sphaeroides).